The primary structure comprises 402 residues: TBC1 domain family member 20 (402 aa).

Residues 1 to 27 (MALRPSKGDGSAGRWDRGAGKADFNAK) are disordered. Basic and acidic residues predominate over residues 14–26 (RWDRGAGKADFNA). In terms of domain architecture, Rab-GAP TBC spans 59-245 (LLTDEIRCQV…RLYDFFLACH (187 aa)). The next 2 helical transmembrane spans lie at 237 to 257 (LYDFFLACHPLMPIYFAAVIV) and 366 to 386 (FVKLAVMGLTVALGAAALAVV).

It is found in the membrane. Its function is as follows. GTPase-activating protein specific for Rab1 and Rab2 small GTPase families for which it can accelerate the intrinsic GTP hydrolysis rate by more than five orders of magnitude. Also shows GAP activity for RAB18 GTPase. Promotes RAB18 dissociation from the endoplasmic reticulum (ER) membrane into the cytosol, probably through stimulating RAB18 GTP-hydrolysis. Involved in maintaining endoplasmic reticulum structure. The sequence is that of TBC1 domain family member 20 from Mus musculus (Mouse).